A 272-amino-acid polypeptide reads, in one-letter code: MQSKPGRENEEEVNNHHAVQQPMMYAEPWWKNNSFGVVPQARPSGIPSNSSSLDCPNGSESNDVHSASEDGALNGENDGTWKDSQAATSSRSVDNHGMEGNDPALSIRNMHDQPLVQPPELVGHYIACVPNPYQDPYYGGLMGAYGHQQLGFRPYLGMPRERTALPLDMAQEPVYVNAKQYEGILRRRKARAKAELERKVIRDRKPYLHESRHKHAMRRARASGGRFAKKSEVEAGEDAGGRDRERGSATNSSGSEQVETDSNETLNSSGAP.

2 disordered regions span residues 1 to 20 (MQSK…HAVQ) and 34 to 106 (SFGV…PALS). 2 stretches are compositionally biased toward polar residues: residues 46–61 (IPSN…GSES) and 82–92 (KDSQAATSSRS). A Subunit association domain (SAD) motif is present at residues 175 to 198 (YVNAKQYEGILRRRKARAKAELER). Positions 205–230 (KPYLHESRHKHAMRRARASGGRFAKK) form a DNA-binding region, NFYA/HAP2-type. The tract at residues 206–272 (PYLHESRHKH…NETLNSSGAP (67 aa)) is disordered. Positions 211–221 (SRHKHAMRRAR) are enriched in basic residues. The segment covering 229–247 (KKSEVEAGEDAGGRDRERG) has biased composition (basic and acidic residues). Composition is skewed to polar residues over residues 248-257 (SATNSSGSEQ) and 263-272 (NETLNSSGAP).

The protein belongs to the NFYA/HAP2 subunit family. As to quaternary structure, heterotrimeric transcription factor composed of three components, NF-YA, NF-YB and NF-YC. NF-YB and NF-YC must interact and dimerize for NF-YA association and DNA binding. In terms of tissue distribution, ubiquitous.

It localises to the nucleus. Stimulates the transcription of various genes by recognizing and binding to a CCAAT motif in promoters. This chain is Nuclear transcription factor Y subunit A-1 (NFYA1), found in Arabidopsis thaliana (Mouse-ear cress).